The chain runs to 59 residues: Large ribosomal subunit protein uL30 (59 aa).

The protein belongs to the universal ribosomal protein uL30 family. Part of the 50S ribosomal subunit.

This chain is Large ribosomal subunit protein uL30, found in Buchnera aphidicola subsp. Schizaphis graminum (strain Sg).